The sequence spans 354 residues: Holliday junction branch migration complex subunit RuvB (354 aa).

Residues Met1–Ser22 form a disordered region. A large ATPase domain (RuvB-L) region spans residues Thr5–Tyr193. ATP is bound by residues Leu32, Arg33, Gly74, Lys77, Thr78, Thr79, Glu140–Tyr142, Arg183, Tyr193, and Arg230. Thr78 lines the Mg(2+) pocket. Positions Thr194–Asp264 are small ATPAse domain (RuvB-S). The interval Pro267 to Ile354 is head domain (RuvB-H). DNA is bound by residues Arg303, Arg322, and Arg327.

Belongs to the RuvB family. In terms of assembly, homohexamer. Forms an RuvA(8)-RuvB(12)-Holliday junction (HJ) complex. HJ DNA is sandwiched between 2 RuvA tetramers; dsDNA enters through RuvA and exits via RuvB. An RuvB hexamer assembles on each DNA strand where it exits the tetramer. Each RuvB hexamer is contacted by two RuvA subunits (via domain III) on 2 adjacent RuvB subunits; this complex drives branch migration. In the full resolvosome a probable DNA-RuvA(4)-RuvB(12)-RuvC(2) complex forms which resolves the HJ.

It is found in the cytoplasm. The catalysed reaction is ATP + H2O = ADP + phosphate + H(+). The RuvA-RuvB-RuvC complex processes Holliday junction (HJ) DNA during genetic recombination and DNA repair, while the RuvA-RuvB complex plays an important role in the rescue of blocked DNA replication forks via replication fork reversal (RFR). RuvA specifically binds to HJ cruciform DNA, conferring on it an open structure. The RuvB hexamer acts as an ATP-dependent pump, pulling dsDNA into and through the RuvAB complex. RuvB forms 2 homohexamers on either side of HJ DNA bound by 1 or 2 RuvA tetramers; 4 subunits per hexamer contact DNA at a time. Coordinated motions by a converter formed by DNA-disengaged RuvB subunits stimulates ATP hydrolysis and nucleotide exchange. Immobilization of the converter enables RuvB to convert the ATP-contained energy into a lever motion, pulling 2 nucleotides of DNA out of the RuvA tetramer per ATP hydrolyzed, thus driving DNA branch migration. The RuvB motors rotate together with the DNA substrate, which together with the progressing nucleotide cycle form the mechanistic basis for DNA recombination by continuous HJ branch migration. Branch migration allows RuvC to scan DNA until it finds its consensus sequence, where it cleaves and resolves cruciform DNA. In Variovorax paradoxus (strain S110), this protein is Holliday junction branch migration complex subunit RuvB.